The chain runs to 929 residues: Band 3 anion transport protein (929 aa).

M1 is subject to N-acetylmethionine. Topologically, residues 1–422 (MGDMRDHEEV…LSDITDALSP (422 aa)) are cytoplasmic. Residue S18 is modified to Phosphoserine. Phosphotyrosine occurs at positions 31 and 56. The interval 46–67 (ALPTEQTATDYVPSSTSTPHPS) is disordered. The span at 58 to 67 (PSSTSTPHPS) shows a compositional bias: low complexity. The tract at residues 69 to 303 (GQVYVELQEL…LGRAAATLMT (235 aa)) is globular. Positions 190–199 (AVLTRSGGAS) are interaction with ANK1. Phosphoserine occurs at positions 199, 222, and 363. Residues 317-370 (REELLRSLESFLDCSLVLPPTDAPSEKALLNLVPVQKELLRRRYLPSPAKPDPN) form a dimerization arm region. The interval 366–389 (KPDPNLYNTLDLNGGKGGPGDEDD) is disordered. At Y372 the chain carries Phosphotyrosine. Phosphothreonine is present on T374. The helical transmembrane segment at 423–446 (QVLAAVIFIYFAALSPAVTFGGLL) threads the bilayer. Over 447 to 454 (GEKTRNLM) the chain is Extracellular. A helical membrane pass occupies residues 455 to 475 (GVSELLISTAVQGILFALLGA). The Cytoplasmic segment spans residues 476–478 (QPL). A discontinuously helical membrane pass occupies residues 479-495 (LVLGFSGPLLVFEEAFF). Over 496–504 (SFCESNNLE) the chain is Extracellular. A helical membrane pass occupies residues 505–525 (YIVGRAWIGFWLILLVMLVVA). Residues 526-537 (FEGSFLVQYISR) lie on the Cytoplasmic side of the membrane. A helical transmembrane segment spans residues 538 to 560 (YTQEIFSFLISLIFIYETFSKLI). Topologically, residues 561 to 588 (KIFQDYPLQQTYAPVVMKPKPQGPVPNT) are extracellular. Residues 589–609 (ALFSLVLMAGTFLLAMTLRKF) traverse the membrane as a helical segment. Over 610-620 (KNSTYFPGKLR) the chain is Cytoplasmic. Residues 621-641 (RVIGDFGVPISILIMVLVDSF) form a helical membrane-spanning segment. Topologically, residues 642–681 (IKGTYTQKLSVPDGLKVSNSSARGWVIHPLGLYRLFPTWM) are extracellular. N660 carries N-linked (GlcNAc...) asparagine glycosylation. Residues 682–702 (MFASVLPALLVFILIFLESQI) form a helical membrane-spanning segment. At 703-718 (TTLIVSKPERKMIKGS) the chain is on the cytoplasmic side. The helical transmembrane segment at 719 to 737 (GFHLDLLLVVGMGGVAALF) threads the bilayer. A discontinuously helical transmembrane segment spans residues 738–755 (GMPWLSATTVRSVTHANA). Topologically, residues 756–778 (LTVMGKASGPGAAAQIQEVKEQR) are cytoplasmic. 2 helical membrane passes run 779 to 799 (ISGL…PILS) and 800 to 818 (RIPL…VTSL). At 819-856 (SGIQLFDRILLLFKPPKYHPDVPFVKRVKTWRMHLFTG) the chain is on the cytoplasmic side. The discontinuously helical intramembrane region spans 857–887 (IQIICLAVLWVVKSTPASLALPFVLILTVPL). A lipid anchor (S-palmitoyl cysteine) is attached at C861. The Cytoplasmic segment spans residues 888 to 929 (RRLILPLIFRELELQCLDGDDAKVTFDEENGLDEYDEVPMPV). A Phosphotyrosine modification is found at Y922.

This sequence belongs to the anion exchanger (TC 2.A.31) family. In terms of assembly, a dimer in solution, but in its membrane environment, it exists primarily as a mixture of dimers and tetramers and spans the membrane asymmetrically. Component of the ankyrin-1 complex in the erythrocyte, composed of ANK1, RHCE, RHAG, SLC4A1, EPB42, GYPA, GYPB and AQP1. Interacts with STOM; this interaction positively regulates SLC4A1 activity. Interacts with GYPA; a GYPA monomer is bound at each end of the SLC4A1 dimer forming a heterotetramer. Three SLC4A1 dimers (Band 3-I, Band 3-II and Band 3-III) participates in the ankyrin-1 complex. Interacts (via the cytoplasmic domain) with EPB42; this interaction is mediated by the SLC4A1 Band 3-I dimer. Interacts (via the cytoplasmic domain) directly with ANK1; this interaction is mediated by the SLC4A1 Band 3-II and Band 3-III dimers. Interacts with TMEM139. As to expression, detected in erythrocytes (at protein level).

It localises to the cell membrane. The protein localises to the basolateral cell membrane. The enzyme catalyses hydrogencarbonate(in) + chloride(out) = hydrogencarbonate(out) + chloride(in). Its function is as follows. Functions both as a transporter that mediates electroneutral anion exchange across the cell membrane and as a structural protein. Component of the ankyrin-1 complex of the erythrocyte membrane; required for normal flexibility and stability of the erythrocyte membrane and for normal erythrocyte shape via the interactions of its cytoplasmic domain with cytoskeletal proteins, glycolytic enzymes, and hemoglobin. Functions as a transporter that mediates the 1:1 exchange of inorganic anions across the erythrocyte membrane. Mediates chloride-bicarbonate exchange in the kidney, and is required for normal acidification of the urine. This is Band 3 anion transport protein from Mus musculus (Mouse).